A 349-amino-acid polypeptide reads, in one-letter code: Green-sensitive opsin-1 (349 aa).

Residues 1 to 36 (MNGTEGSNFYIPMSNRTGLVRSPYDYTQYYLAEPWK) lie on the Extracellular side of the membrane. Residues asparagine 2 and asparagine 15 are each glycosylated (N-linked (GlcNAc...) asparagine). The chain crosses the membrane as a helical span at residues 37 to 61 (FKALAFYMFLLIIFGFPINVLTLVV). Residues 62–73 (TAQHKKLRQPLN) are Cytoplasmic-facing. The chain crosses the membrane as a helical span at residues 74-99 (YILVNLAFAGTIMVIFGFTVSFYCSL). At 100 to 113 (VGYMALGPLGCVME) the chain is on the extracellular side. A disulfide bond links cysteine 110 and cysteine 187. The chain crosses the membrane as a helical span at residues 114-133 (GFFATLGGQVALWSLVVLAI). At 134–152 (ERYIVVCKPMGSFKFSANH) the chain is on the cytoplasmic side. A helical membrane pass occupies residues 153 to 176 (AMAGIAFTWFMACSCAVPPLFGWS). The Extracellular portion of the chain corresponds to 177–202 (RYLPEGMQTSCGPDYYTLNPEYNNES). N-linked (GlcNAc...) asparagine glycosylation occurs at asparagine 200. The chain crosses the membrane as a helical span at residues 203 to 230 (YVMYMFSCHFCIPVTTIFFTYGSLVCTV). Residues 231–252 (KAAAAQQQESESTQKAEREVTR) lie on the Cytoplasmic side of the membrane. A helical transmembrane segment spans residues 253 to 276 (MVILMVLGFLFAWVPYASFAAWIF). Residues 277 to 284 (FNRGAAFS) are Extracellular-facing. A helical transmembrane segment spans residues 285–309 (AQAMAVPAFFSKTSAVFNPIIYVLL). Lysine 296 is subject to N6-(retinylidene)lysine. Residues 310–349 (NKQFRSCMLNTLFCGKSPLGDDESSSVSTSKTEVSSVSPA) are Cytoplasmic-facing. Residues 328-349 (LGDDESSSVSTSKTEVSSVSPA) are disordered. The span at 334–349 (SSVSTSKTEVSSVSPA) shows a compositional bias: low complexity.

Belongs to the G-protein coupled receptor 1 family. Opsin subfamily. In terms of processing, phosphorylated on some or all of the serine and threonine residues present in the C-terminal region. In terms of tissue distribution, retinal double cone accessory photoreceptor cell outer segments.

It localises to the membrane. Functionally, visual pigments are the light-absorbing molecules that mediate vision. They consist of an apoprotein, opsin, covalently linked to cis-retinal. This is Green-sensitive opsin-1 (opn1mw1) from Danio rerio (Zebrafish).